Here is a 314-residue protein sequence, read N- to C-terminus: 4-hydroxy-3-methylbut-2-enyl diphosphate reductase (314 aa).

A [4Fe-4S] cluster-binding site is contributed by C12. The (2E)-4-hydroxy-3-methylbut-2-enyl diphosphate site is built by H41 and H74. Positions 41 and 74 each coordinate dimethylallyl diphosphate. Residues H41 and H74 each contribute to the isopentenyl diphosphate site. A [4Fe-4S] cluster-binding site is contributed by C96. H124 provides a ligand contact to (2E)-4-hydroxy-3-methylbut-2-enyl diphosphate. Residue H124 participates in dimethylallyl diphosphate binding. H124 is an isopentenyl diphosphate binding site. The active-site Proton donor is E126. T167 contacts (2E)-4-hydroxy-3-methylbut-2-enyl diphosphate. Residue C197 participates in [4Fe-4S] cluster binding. 4 residues coordinate (2E)-4-hydroxy-3-methylbut-2-enyl diphosphate: S225, S226, N227, and S269. Dimethylallyl diphosphate is bound by residues S225, S226, N227, and S269. Isopentenyl diphosphate contacts are provided by S225, S226, N227, and S269.

This sequence belongs to the IspH family. It depends on [4Fe-4S] cluster as a cofactor.

The enzyme catalyses isopentenyl diphosphate + 2 oxidized [2Fe-2S]-[ferredoxin] + H2O = (2E)-4-hydroxy-3-methylbut-2-enyl diphosphate + 2 reduced [2Fe-2S]-[ferredoxin] + 2 H(+). It catalyses the reaction dimethylallyl diphosphate + 2 oxidized [2Fe-2S]-[ferredoxin] + H2O = (2E)-4-hydroxy-3-methylbut-2-enyl diphosphate + 2 reduced [2Fe-2S]-[ferredoxin] + 2 H(+). The protein operates within isoprenoid biosynthesis; dimethylallyl diphosphate biosynthesis; dimethylallyl diphosphate from (2E)-4-hydroxy-3-methylbutenyl diphosphate: step 1/1. It participates in isoprenoid biosynthesis; isopentenyl diphosphate biosynthesis via DXP pathway; isopentenyl diphosphate from 1-deoxy-D-xylulose 5-phosphate: step 6/6. Its function is as follows. Catalyzes the conversion of 1-hydroxy-2-methyl-2-(E)-butenyl 4-diphosphate (HMBPP) into a mixture of isopentenyl diphosphate (IPP) and dimethylallyl diphosphate (DMAPP). Acts in the terminal step of the DOXP/MEP pathway for isoprenoid precursor biosynthesis. In Histophilus somni (strain 2336) (Haemophilus somnus), this protein is 4-hydroxy-3-methylbut-2-enyl diphosphate reductase.